Reading from the N-terminus, the 387-residue chain is tRNA-specific 2-thiouridylase MnmA (387 aa).

Residues 34–41 (AMSGGVDS) and Met-60 contribute to the ATP site. Cys-127 (nucleophile) is an active-site residue. Cys-127 and Cys-223 are disulfide-bonded. Position 151 (Gly-151) interacts with ATP. The tract at residues 173–175 (KDQ) is interaction with tRNA. Cys-223 acts as the Cysteine persulfide intermediate in catalysis.

The protein belongs to the MnmA/TRMU family.

It localises to the cytoplasm. It carries out the reaction S-sulfanyl-L-cysteinyl-[protein] + uridine(34) in tRNA + AH2 + ATP = 2-thiouridine(34) in tRNA + L-cysteinyl-[protein] + A + AMP + diphosphate + H(+). Its function is as follows. Catalyzes the 2-thiolation of uridine at the wobble position (U34) of tRNA, leading to the formation of s(2)U34. In Anaplasma marginale (strain St. Maries), this protein is tRNA-specific 2-thiouridylase MnmA.